A 141-amino-acid polypeptide reads, in one-letter code: Aspartate 1-decarboxylase (141 aa).

Residue Ser-25 is the Schiff-base intermediate with substrate; via pyruvic acid of the active site. Residue Ser-25 is modified to Pyruvic acid (Ser). Thr-57 provides a ligand contact to substrate. The Proton donor role is filled by Tyr-58. 73–75 (GAA) lines the substrate pocket.

Belongs to the PanD family. As to quaternary structure, heterooctamer of four alpha and four beta subunits. Pyruvate is required as a cofactor. In terms of processing, is synthesized initially as an inactive proenzyme, which is activated by self-cleavage at a specific serine bond to produce a beta-subunit with a hydroxyl group at its C-terminus and an alpha-subunit with a pyruvoyl group at its N-terminus.

It localises to the cytoplasm. It carries out the reaction L-aspartate + H(+) = beta-alanine + CO2. The protein operates within cofactor biosynthesis; (R)-pantothenate biosynthesis; beta-alanine from L-aspartate: step 1/1. Its function is as follows. Catalyzes the pyruvoyl-dependent decarboxylation of aspartate to produce beta-alanine. The chain is Aspartate 1-decarboxylase from Pseudarthrobacter chlorophenolicus (strain ATCC 700700 / DSM 12829 / CIP 107037 / JCM 12360 / KCTC 9906 / NCIMB 13794 / A6) (Arthrobacter chlorophenolicus).